A 259-amino-acid chain; its full sequence is Factor V activator (259 aa).

The signal sequence occupies residues M1–A18. Positions Q19–L24 are excised as a propeptide. A Peptidase S1 domain is found at V25–A251. Disulfide bonds link C31-C165, C52-C68, C100-C258, C144-C212, C176-C191, and C202-C227. Active-site charge relay system residues include H67 and D112. S206 functions as the Charge relay system in the catalytic mechanism. N253 carries an N-linked (GlcNAc...) asparagine glycan.

Belongs to the peptidase S1 family. Snake venom subfamily. As to quaternary structure, monomer. In terms of processing, N-glycosylated. Contains 4.4% of hexoses, 4.4% of hexosamines and 3.1% of sialic acids. In terms of tissue distribution, expressed by the venom gland.

It is found in the secreted. The catalysed reaction is Fully activates human clotting factor V by a single cleavage at the 1545-Trp-Tyr-Leu-Arg-|-Ser-Asn-Asn-Gly-1552 bond. Cattle, but not rabbit, factor V is cleaved, and no other proteins of the clotting system are attacked. Esterase activity is observed on Bz-Arg-OEt and Tos-Arg-OMe, and amidase activity on Phe-pipecolyl-Arg-NHPhNO2.. With respect to regulation, inhibited by D-Phe-Pro-Arg-chloromethyl ketone (FPRCK) (98%), PMSF (93%), benzamidine (67%), and diisopropylfluorophosphate (DFP). Is not inhibited by BPTI, antithrombin and EDTA. In terms of biological role, venom serine protease that converts factor V (F5) to the active form Va in the presence of calcium ions and phospholipids. It cleaves the Arg(1545)-Ser(1546) linkage in the human factor V molecule. Has hydrolytic activities against BAEE (1.2 U/mg), TAME, and Pro-Phe-Arg-MCA (4.9 U/mg). Shows coagulant activity. This Macrovipera lebetinus (Levantine viper) protein is Factor V activator.